The primary structure comprises 352 residues: Anthranilate phosphoribosyltransferase (352 aa).

Residues Gly-91, 94–95 (GD), Thr-99, 101–104 (NIST), 119–127 (KHGNRASSS), and Ser-131 each bind 5-phospho-alpha-D-ribose 1-diphosphate. Gly-91 is an anthranilate binding site. Ser-103 lines the Mg(2+) pocket. Position 122 (Asn-122) interacts with anthranilate. Residue Arg-177 participates in anthranilate binding. Residues Asp-235 and Glu-236 each coordinate Mg(2+).

It belongs to the anthranilate phosphoribosyltransferase family. As to quaternary structure, homodimer. Requires Mg(2+) as cofactor.

It carries out the reaction N-(5-phospho-beta-D-ribosyl)anthranilate + diphosphate = 5-phospho-alpha-D-ribose 1-diphosphate + anthranilate. It functions in the pathway amino-acid biosynthesis; L-tryptophan biosynthesis; L-tryptophan from chorismate: step 2/5. Its function is as follows. Catalyzes the transfer of the phosphoribosyl group of 5-phosphorylribose-1-pyrophosphate (PRPP) to anthranilate to yield N-(5'-phosphoribosyl)-anthranilate (PRA). The sequence is that of Anthranilate phosphoribosyltransferase from Arthrobacter sp. (strain FB24).